Reading from the N-terminus, the 274-residue chain is NADPH-dependent 7-cyano-7-deazaguanine reductase (274 aa).

A substrate-binding site is contributed by Ile81–Ser83. Ser83–Lys84 is a binding site for NADPH. Cys182 (thioimide intermediate) is an active-site residue. The active-site Proton donor is the Asp189. His221–Glu222 lines the substrate pocket. Arg250–Gly251 serves as a coordination point for NADPH.

The protein belongs to the GTP cyclohydrolase I family. QueF type 2 subfamily. As to quaternary structure, homodimer.

It is found in the cytoplasm. It catalyses the reaction 7-aminomethyl-7-carbaguanine + 2 NADP(+) = 7-cyano-7-deazaguanine + 2 NADPH + 3 H(+). The protein operates within tRNA modification; tRNA-queuosine biosynthesis. In terms of biological role, catalyzes the NADPH-dependent reduction of 7-cyano-7-deazaguanine (preQ0) to 7-aminomethyl-7-deazaguanine (preQ1). The sequence is that of NADPH-dependent 7-cyano-7-deazaguanine reductase from Hahella chejuensis (strain KCTC 2396).